A 225-amino-acid polypeptide reads, in one-letter code: Small ribosomal subunit protein uS5 (225 aa).

Positions 57 to 120 (LEEQVLDVKL…AHAKLSLIKV (64 aa)) constitute an S5 DRBM domain.

Belongs to the universal ribosomal protein uS5 family. As to quaternary structure, part of the 30S ribosomal subunit. Contacts protein S4.

Functionally, with S4 and S12 plays an important role in translational accuracy. This chain is Small ribosomal subunit protein uS5, found in Methanococcus maripaludis (strain DSM 14266 / JCM 13030 / NBRC 101832 / S2 / LL).